A 71-amino-acid polypeptide reads, in one-letter code: MYIIFRCDCGRALYSREGAKTRKCVCGRTVNVKDRRIFGRADDFEEASELVRKLQEEKYGSCHFTNPSKRE.

The sequence is that of Protein MTH_1184 from Methanothermobacter thermautotrophicus (strain ATCC 29096 / DSM 1053 / JCM 10044 / NBRC 100330 / Delta H) (Methanobacterium thermoautotrophicum).